A 309-amino-acid chain; its full sequence is UDP-N-acetylenolpyruvoylglucosamine reductase (309 aa).

In terms of domain architecture, FAD-binding PCMH-type spans Arg-34–Ala-199. The active site involves Arg-179. Residue Ser-228 is the Proton donor of the active site. Glu-298 is a catalytic residue.

The protein belongs to the MurB family. FAD serves as cofactor.

The protein localises to the cytoplasm. It catalyses the reaction UDP-N-acetyl-alpha-D-muramate + NADP(+) = UDP-N-acetyl-3-O-(1-carboxyvinyl)-alpha-D-glucosamine + NADPH + H(+). Its pathway is cell wall biogenesis; peptidoglycan biosynthesis. In terms of biological role, cell wall formation. This is UDP-N-acetylenolpyruvoylglucosamine reductase from Rhodopseudomonas palustris (strain ATCC BAA-98 / CGA009).